The sequence spans 389 residues: Smad nuclear interacting protein 1 (389 aa).

The segment covering 1–10 (MKAGKSERER) has biased composition (basic and acidic residues). The segment at 1–212 (MKAGKSERER…GNKNKEVPVK (212 aa)) is disordered. Phosphoserine is present on Ser18. Residue Lys28 forms a Glycyl lysine isopeptide (Lys-Gly) (interchain with G-Cter in SUMO); alternate linkage. A Glycyl lysine isopeptide (Lys-Gly) (interchain with G-Cter in SUMO1); alternate cross-link involves residue Lys28. Residue Lys28 forms a Glycyl lysine isopeptide (Lys-Gly) (interchain with G-Cter in SUMO2); alternate linkage. Positions 28 to 43 (KQERLSPEPVAHRRPD) are enriched in basic and acidic residues. Phosphoserine is present on residues Ser33 and Ser48. Residues 54–72 (AESGSAGHRGSRARGASRS) show a composition bias toward low complexity. Residues 73 to 95 (PAKKKSKSSGRRSKSPRTKRSRS) show a composition bias toward basic residues. Ser95 is subject to Phosphoserine. Basic and acidic residues-rich tracts occupy residues 103-138 (VKQE…ERDR) and 147-163 (RSSD…DRDS). A Glycyl lysine isopeptide (Lys-Gly) (interchain with G-Cter in SUMO2) cross-link involves residue Lys104. Ser149 is modified (phosphoserine). Residues 166 to 197 (LQAQEEERDFNNARRREHRQQNESAGAEAQEV) adopt a coiled-coil conformation. Lys214 is covalently cross-linked (Glycyl lysine isopeptide (Lys-Gly) (interchain with G-Cter in SUMO2)). The 64-residue stretch at 272 to 335 (YLLGRHRRIA…NGTFLNNKRI (64 aa)) folds into the FHA domain. Residues 363–373 (ESSDTSELDRK) are compositionally biased toward basic and acidic residues. Residues 363–389 (ESSDTSELDRKEDEDEEEEEEMVSDSS) are disordered. The segment covering 374-389 (EDEDEEEEEEMVSDSS) has biased composition (acidic residues). Ser386 carries the phosphoserine modification.

Component of activated spliceosome complexes. Component of the minor spliceosome, which splices U12-type introns. Binds SMAD4 and CREBBP/EP300. Binds the SMAD1/OAZ1/PSMB4 complex. Interacts with DROSHA and SMARCA4. Component of the SNARP complex which consists at least of SNIP1, SNW1, THRAP3, BCLAF1 and PNN. Post-translationally, degraded by the proteasome upon binding to the SMAD1/OAZ1/PSMB4 complex.

It is found in the nucleus. Required for pre-mRNA splicing as component of the spliceosome. As a component of the minor spliceosome, involved in the splicing of U12-type introns in pre-mRNAs. Down-regulates NF-kappa-B signaling by competing with RELA for CREBBP/EP300 binding. Involved in the microRNA (miRNA) biogenesis. May be involved in cyclin-D1/CCND1 mRNA stability through the SNARP complex which associates with both the 3'end of the CCND1 gene and its mRNA. The chain is Smad nuclear interacting protein 1 (Snip1) from Rattus norvegicus (Rat).